The primary structure comprises 164 residues: Crossover junction endodeoxyribonuclease RuvC (164 aa).

Active-site residues include Asp-7, Glu-67, and Asp-140. Asp-7, Glu-67, and Asp-140 together coordinate Mg(2+).

This sequence belongs to the RuvC family. In terms of assembly, homodimer which binds Holliday junction (HJ) DNA. The HJ becomes 2-fold symmetrical on binding to RuvC with unstacked arms; it has a different conformation from HJ DNA in complex with RuvA. In the full resolvosome a probable DNA-RuvA(4)-RuvB(12)-RuvC(2) complex forms which resolves the HJ. Mg(2+) serves as cofactor.

It is found in the cytoplasm. The catalysed reaction is Endonucleolytic cleavage at a junction such as a reciprocal single-stranded crossover between two homologous DNA duplexes (Holliday junction).. In terms of biological role, the RuvA-RuvB-RuvC complex processes Holliday junction (HJ) DNA during genetic recombination and DNA repair. Endonuclease that resolves HJ intermediates. Cleaves cruciform DNA by making single-stranded nicks across the HJ at symmetrical positions within the homologous arms, yielding a 5'-phosphate and a 3'-hydroxyl group; requires a central core of homology in the junction. The consensus cleavage sequence is 5'-(A/T)TT(C/G)-3'. Cleavage occurs on the 3'-side of the TT dinucleotide at the point of strand exchange. HJ branch migration catalyzed by RuvA-RuvB allows RuvC to scan DNA until it finds its consensus sequence, where it cleaves and resolves the cruciform DNA. This Pelotomaculum thermopropionicum (strain DSM 13744 / JCM 10971 / SI) protein is Crossover junction endodeoxyribonuclease RuvC.